Consider the following 1151-residue polypeptide: Ankyrin and IPT/TIG repeat-containing protein C26H5.05 (1151 aa).

Disordered stretches follow at residues Asn-77–Leu-104, Lys-452–Arg-511, and Gln-516–Glu-535. Over residues Ser-87–Gln-98 the composition is skewed to polar residues. Over residues Lys-452–Gly-463 the composition is skewed to basic and acidic residues. 2 stretches are compositionally biased toward polar residues: residues Lys-464 to Pro-496 and Leu-517 to Lys-532. The 82-residue stretch at Pro-658–Tyr-739 folds into the IPT/TIG domain. 2 ANK repeats span residues Ser-861–Lys-890 and Leu-894–Val-923. Positions Pro-1041–Asp-1067 are disordered. The segment covering Ser-1058 to Asp-1067 has biased composition (basic and acidic residues). Residues Met-1113–Leu-1133 form a helical membrane-spanning segment.

Its subcellular location is the vacuole membrane. The polypeptide is Ankyrin and IPT/TIG repeat-containing protein C26H5.05 (Schizosaccharomyces pombe (strain 972 / ATCC 24843) (Fission yeast)).